Consider the following 33-residue polypeptide: Potassium channel toxin alpha-KTx 10.5 (33 aa).

3 cysteine pairs are disulfide-bonded: Cys4–Cys23, Cys9–Cys28, and Cys13–Cys30.

As to expression, expressed by the venom gland.

The protein localises to the secreted. Inhibits less than 5% of human voltage-gated potassium (Kv) channel Kv1.3/KCNA3 currents at 100nM concentration and does not block human Kv1.1/KCNA1 and Kv1.2/KCNA2 currents. The sequence is that of Potassium channel toxin alpha-KTx 10.5 from Centruroides bonito (Scorpion).